Here is a 528-residue protein sequence, read N- to C-terminus: Cytochrome P450 monooxygenase vrcB (528 aa).

A helical transmembrane segment spans residues 5–27 (YGLFFAAVALYSVALVIYRLYLH). Residue cysteine 470 participates in heme binding.

The protein belongs to the cytochrome P450 family. Requires heme as cofactor.

The protein localises to the membrane. It carries out the reaction variecoladiene + 4 reduced [NADPH--hemoprotein reductase] + 4 O2 = variecolin + 4 oxidized [NADPH--hemoprotein reductase] + 6 H2O + 4 H(+). The protein operates within secondary metabolite biosynthesis; terpenoid biosynthesis. Cytochrome P450 monooxygenase; part of the gene cluster that mediates the biosynthesis of the sesterterpene variecolin. The first step in the pathway is performed by the variecoladiene synthase vrcA that possesses both prenyl transferase and terpene cyclase activity, converting isopentenyl diphosphate and dimethylallyl diphosphate into geranylfarnesyl pyrophosphate (GFPP) and then converting GFPP into the tetracyclic variecoladiene. The cytochrome P450 monooxygenase vrcB then catalyzes multiple oxidations at C-5 and C-20 positions to yield variecolin. The protein is Cytochrome P450 monooxygenase vrcB of Aspergillus aculeatus (strain ATCC 16872 / CBS 172.66 / WB 5094).